We begin with the raw amino-acid sequence, 257 residues long: uncharacterized protein (257 aa).

NAD(+) contacts are provided by Asp34, Asp60, Val61, Asn87, Tyr152, and Lys156. Residue Tyr152 is the Proton acceptor of the active site.

It belongs to the short-chain dehydrogenases/reductases (SDR) family.

This is an uncharacterized protein from Bacillus subtilis (strain 168).